A 249-amino-acid chain; its full sequence is 4-hydroxy-tetrahydrodipicolinate reductase (249 aa).

NAD(+) contacts are provided by residues 8–13 (GVTGQM), 87–89 (GTT), and 111–114 (ATNF). His143 acts as the Proton donor/acceptor in catalysis. Position 144 (His144) interacts with (S)-2,3,4,5-tetrahydrodipicolinate. Lys147 acts as the Proton donor in catalysis. 153 to 154 (GT) contributes to the (S)-2,3,4,5-tetrahydrodipicolinate binding site.

Belongs to the DapB family.

Its subcellular location is the cytoplasm. It catalyses the reaction (S)-2,3,4,5-tetrahydrodipicolinate + NAD(+) + H2O = (2S,4S)-4-hydroxy-2,3,4,5-tetrahydrodipicolinate + NADH + H(+). The enzyme catalyses (S)-2,3,4,5-tetrahydrodipicolinate + NADP(+) + H2O = (2S,4S)-4-hydroxy-2,3,4,5-tetrahydrodipicolinate + NADPH + H(+). Its pathway is amino-acid biosynthesis; L-lysine biosynthesis via DAP pathway; (S)-tetrahydrodipicolinate from L-aspartate: step 4/4. Functionally, catalyzes the conversion of 4-hydroxy-tetrahydrodipicolinate (HTPA) to tetrahydrodipicolinate. In Haloarcula marismortui (strain ATCC 43049 / DSM 3752 / JCM 8966 / VKM B-1809) (Halobacterium marismortui), this protein is 4-hydroxy-tetrahydrodipicolinate reductase.